A 469-amino-acid polypeptide reads, in one-letter code: Cytosolic beta-glucosidase (469 aa).

3 residues coordinate substrate: Gln17, His120, and Asn164. Catalysis depends on Glu165, which acts as the Proton donor. Tyr309 contacts substrate. The active-site Nucleophile is Glu373. Substrate contacts are provided by residues Trp417 and 424–425 (EW).

Belongs to the glycosyl hydrolase 1 family. Klotho subfamily. May interact with NEU2. Post-translationally, the N-terminus is blocked. As to expression, present in small intestine (at protein level). Expressed in liver, small intestine, colon, spleen and kidney. Down-regulated in renal cell carcinomas and hepatocellular carcinomas.

Its subcellular location is the cytoplasm. It is found in the cytosol. It catalyses the reaction Hydrolysis of terminal, non-reducing beta-D-glucosyl residues with release of beta-D-glucose.. The catalysed reaction is a beta-D-glucosyl-(1&lt;-&gt;1')-N-acylsphing-4-enine + H2O = an N-acylsphing-4-enine + D-glucose. The enzyme catalyses a beta-D-galactosyl-(1&lt;-&gt;1')-N-acylsphing-4-enine + H2O = an N-acylsphing-4-enine + D-galactose. It carries out the reaction beta-D-glucosyl-(1&lt;-&gt;1)-sphing-4-enine + H2O = sphing-4-enine + D-glucose. It catalyses the reaction beta-D-glucosyl-(1&lt;-&gt;1)-N-octadecanoylsphing-4-enine + H2O = N-octadecanoylsphing-4-enine + D-glucose. The catalysed reaction is beta-D-galactosyl-(1&lt;-&gt;1)-sphing-4-enine + H2O = sphing-4-enine + D-galactose. The enzyme catalyses beta-D-galactosyl-(1&lt;-&gt;1')-N-octadecanoylsphing-4-enine + H2O = N-octadecanoylsphing-4-enine + D-galactose. It carries out the reaction a beta-D-xylosyl-(1&lt;-&gt;1')-N-acylsphing-4-enine + cholesterol = cholesteryl 3-beta-D-xyloside + an N-acylsphing-4-enine. Inhibited by 2,4-dinitrophenyl-2-fluoro-2-deoxy-beta-D-glucopyranoside. Inhibited by sodium taurocholate. Inhibited by alpha-1-C-nonyl-DIX/AnDIX. The glucosylceramidase activity is slightly inhibited by conduritol B epoxide/CBE while the galactosylceramidase activity is not. Neutral cytosolic beta-glycosidase with a broad substrate specificity that could play a role in the catabolism of glycosylceramides. Has a significant glucosylceramidase activity in vitro. However, that activity is relatively low and its significance in vivo is not clear. Hydrolyzes galactosylceramides/GalCers, glucosylsphingosines/GlcSphs and galactosylsphingosines/GalSphs. However, the in vivo relevance of these activities is unclear. It can also hydrolyze a broad variety of dietary glycosides including phytoestrogens, flavonols, flavones, flavanones and cyanogens in vitro and could therefore play a role in the metabolism of xenobiotics. Possesses transxylosylase activity in vitro using xylosylated ceramides/XylCers (such as beta-D-xylosyl-(1&lt;-&gt;1')-N-acylsphing-4-enine) as xylosyl donors and cholesterol as acceptor. Could also play a role in the catabolism of cytosolic sialyl free N-glycans. The sequence is that of Cytosolic beta-glucosidase from Homo sapiens (Human).